A 341-amino-acid polypeptide reads, in one-letter code: tRNA N6-adenosine threonylcarbamoyltransferase (341 aa).

Residues H115 and H119 each contribute to the Fe cation site. Substrate contacts are provided by residues 137–141 (AVSGG), D170, G183, D187, and N276. A Fe cation-binding site is contributed by D306.

Belongs to the KAE1 / TsaD family. Requires Fe(2+) as cofactor.

The protein resides in the cytoplasm. It catalyses the reaction L-threonylcarbamoyladenylate + adenosine(37) in tRNA = N(6)-L-threonylcarbamoyladenosine(37) in tRNA + AMP + H(+). Required for the formation of a threonylcarbamoyl group on adenosine at position 37 (t(6)A37) in tRNAs that read codons beginning with adenine. Is involved in the transfer of the threonylcarbamoyl moiety of threonylcarbamoyl-AMP (TC-AMP) to the N6 group of A37, together with TsaE and TsaB. TsaD likely plays a direct catalytic role in this reaction. The protein is tRNA N6-adenosine threonylcarbamoyltransferase of Lacticaseibacillus casei (strain BL23) (Lactobacillus casei).